The following is a 146-amino-acid chain: Universal stress protein MTH_1154 (146 aa).

It belongs to the universal stress protein A family.

The sequence is that of Universal stress protein MTH_1154 from Methanothermobacter thermautotrophicus (strain ATCC 29096 / DSM 1053 / JCM 10044 / NBRC 100330 / Delta H) (Methanobacterium thermoautotrophicum).